A 739-amino-acid polypeptide reads, in one-letter code: Cleavage and polyadenylation specificity factor subunit 2 (739 aa).

Basic and acidic residues predominate over residues 411–423 (VKEEETKASHGSD). Positions 411–430 (VKEEETKASHGSDDNSSEPM) are disordered.

The protein belongs to the metallo-beta-lactamase superfamily. RNA-metabolizing metallo-beta-lactamase-like family. CPSF2/YSH1 subfamily. As to quaternary structure, component of the CPSF complex, at least composed of CPSF160, CPSF100, CPSF73-I, CPSF73-II, CPSF30, FY and FIPS5. Forms a complex with cleavage and polyadenylation specificity factor (CPSF) subunits FY, PAPS2, CSTF50, CPSF30, CPSF73-I, CPSF73-II and CPSF160.

Its subcellular location is the nucleus. It is found in the cytoplasm. Functionally, CPSF plays a key role in pre-mRNA 3'-end formation, recognizing the AAUAAA signal sequence and interacting with poly(A)polymerase and other factors to bring about cleavage and poly(A) addition. Required for antisense-RNA-mediated gene silencing. This Arabidopsis thaliana (Mouse-ear cress) protein is Cleavage and polyadenylation specificity factor subunit 2 (CPSF100).